A 392-amino-acid polypeptide reads, in one-letter code: Acetyl-CoA acetyltransferase (392 aa).

Cys87 (acyl-thioester intermediate) is an active-site residue. Residues His348 and Cys378 each act as proton acceptor in the active site.

Belongs to the thiolase-like superfamily. Thiolase family.

It is found in the cytoplasm. It carries out the reaction 2 acetyl-CoA = acetoacetyl-CoA + CoA. It participates in metabolic intermediate biosynthesis; (R)-mevalonate biosynthesis; (R)-mevalonate from acetyl-CoA: step 1/3. Involved in the production of polyhydroxyalkonic acids (PHAs), composed primarily of 3-hydroxybutyric acid (3HB) and 3-hydroxyvaleric acid (3HV). This Chromobacterium violaceum (strain ATCC 12472 / DSM 30191 / JCM 1249 / CCUG 213 / NBRC 12614 / NCIMB 9131 / NCTC 9757 / MK) protein is Acetyl-CoA acetyltransferase (phaA).